The following is a 203-amino-acid chain: Peptidyl-tRNA hydrolase (203 aa).

Tyr16 serves as a coordination point for tRNA. Residue His21 is the Proton acceptor of the active site. Positions 68, 70, and 116 each coordinate tRNA.

It belongs to the PTH family. In terms of assembly, monomer.

The protein localises to the cytoplasm. The catalysed reaction is an N-acyl-L-alpha-aminoacyl-tRNA + H2O = an N-acyl-L-amino acid + a tRNA + H(+). In terms of biological role, hydrolyzes ribosome-free peptidyl-tRNAs (with 1 or more amino acids incorporated), which drop off the ribosome during protein synthesis, or as a result of ribosome stalling. Functionally, catalyzes the release of premature peptidyl moieties from peptidyl-tRNA molecules trapped in stalled 50S ribosomal subunits, and thus maintains levels of free tRNAs and 50S ribosomes. This is Peptidyl-tRNA hydrolase from Nostoc sp. (strain PCC 7120 / SAG 25.82 / UTEX 2576).